Reading from the N-terminus, the 962-residue chain is UvrABC system protein A (962 aa).

An ATP-binding site is contributed by Gly38 to Ser45. 2 ABC transporter domains span residues Trp319–Leu597 and Pro617–Arg944. Gly649 to Ser656 is a binding site for ATP. The C4-type zinc finger occupies Cys748–Cys774.

Belongs to the ABC transporter superfamily. UvrA family. Forms a heterotetramer with UvrB during the search for lesions.

It localises to the cytoplasm. Functionally, the UvrABC repair system catalyzes the recognition and processing of DNA lesions. UvrA is an ATPase and a DNA-binding protein. A damage recognition complex composed of 2 UvrA and 2 UvrB subunits scans DNA for abnormalities. When the presence of a lesion has been verified by UvrB, the UvrA molecules dissociate. This is UvrABC system protein A from Methanothermobacter thermautotrophicus (strain ATCC 29096 / DSM 1053 / JCM 10044 / NBRC 100330 / Delta H) (Methanobacterium thermoautotrophicum).